Here is a 542-residue protein sequence, read N- to C-terminus: MATTVTCTRFTDEYQLYEDIGKGAFSVVRRCVKLCTGHEYAAKIINTKKLSARDHQKLEREARICRLLKHSNIVRLHDSISEEGFHYLVFDLVTGGELFEDIVAREYYSEADASHCIQQILEAVLHCHQMGVVHRDLKPENLLLASKCKGAAVKLADFGLAIEVQGDQQAWFGFAGTPGYLSPEVLRKEAYGKPVDIWACGVILYILLVGYPPFWDEDQHKLYQQIKAGAYDFPSPEWDTVTPEAKNLINQMLTINPAKRITAHEALKHPWVCQRSTVASMMHRQETVECLKKFNARRKLKGAILTTMLATRNFSVGRQTTAPATMSTAASGTTMGLVEQAKSLLNKKADGVKPQTNSTKNSSAITSPKGSLPPAALEPQTTVIHNPVDGIKESSDSTNTTIEDEDAKARKQEIIKTTEQLIEAVNNGDFEAYAKICDPGLTSFEPEALGNLVEGMDFHRFYFENLLAKNSKPIHTTILNPHVHVIGEDAACIAYIRLTQYIDGQGRPRTSQSEETRVWHRRDGKWQNVHFHCSGAPVAPLQ.

One can recognise a Protein kinase domain in the interval 14–272 (YQLYEDIGKG…AHEALKHPWV (259 aa)). Tyr-17 carries the phosphotyrosine modification. ATP-binding positions include 20–28 (IGKGAFSVV) and Lys-43. The active-site Proton acceptor is the Asp-136. The segment at 283–292 (HRQETVECLK) is autoinhibitory domain. Thr-287 bears the Phosphothreonine; by autocatalysis mark. The tract at residues 291–301 (LKKFNARRKLK) is calmodulin-binding. Residues Thr-306 and Thr-307 each carry the phosphothreonine; by autocatalysis modification. The segment at 349-376 (ADGVKPQTNSTKNSSAITSPKGSLPPAA) is disordered. Residues 354-369 (PQTNSTKNSSAITSPK) are compositionally biased toward polar residues. Phosphoserine is present on residues Ser-367, Ser-371, Ser-394, and Ser-397. A phosphothreonine mark is found at Thr-400 and Thr-401.

It belongs to the protein kinase superfamily. CAMK Ser/Thr protein kinase family. CaMK subfamily. CAMK2 is composed of 4 different chains: alpha (CAMK2A), beta (CAMK2B), gamma (CAMK2G), and delta (CAMK2D). The different isoforms assemble into homo- or heteromultimeric holoenzymes composed of 12 subunits with two hexameric rings stacked one on top of the other. Interacts with SYNGAP1, CAMK2N2 and MPDZ. Interacts with FOXO3. Interacts (when in a kinase inactive state not associated with calmodulin) with ARC; leading to target ARC to inactive synapses. Interacts with CAMK2N1; this interaction requires CAMK2B activation by Ca(2+). Post-translationally, autophosphorylation of Thr-287 following activation by Ca(2+)/calmodulin. Phosphorylation of Thr-287 locks the kinase into an activated state.

It is found in the cytoplasm. It localises to the cytoskeleton. Its subcellular location is the microtubule organizing center. The protein localises to the centrosome. The protein resides in the sarcoplasmic reticulum membrane. It is found in the synapse. The catalysed reaction is L-seryl-[protein] + ATP = O-phospho-L-seryl-[protein] + ADP + H(+). It catalyses the reaction L-threonyl-[protein] + ATP = O-phospho-L-threonyl-[protein] + ADP + H(+). With respect to regulation, activated by Ca(2+)/calmodulin. Binding of calmodulin results in conformational change that relieves intrasteric autoinhibition and allows autophosphorylation of Thr-287 which turns the kinase in a constitutively active form and confers to the kinase a Ca(2+)-independent activity. Functionally, calcium/calmodulin-dependent protein kinase that functions autonomously after Ca(2+)/calmodulin-binding and autophosphorylation, and is involved in dendritic spine and synapse formation, neuronal plasticity and regulation of sarcoplasmic reticulum Ca(2+) transport in skeletal muscle. In neurons, plays an essential structural role in the reorganization of the actin cytoskeleton during plasticity by binding and bundling actin filaments in a kinase-independent manner. This structural function is required for correct targeting of CaMK2A, which acts downstream of NMDAR to promote dendritic spine and synapse formation and maintain synaptic plasticity which enables long-term potentiation (LTP) and hippocampus-dependent learning. In developing hippocampal neurons, promotes arborization of the dendritic tree and in mature neurons, promotes dendritic remodeling. Also regulates the migration of developing neurons. Participates in the modulation of skeletal muscle function in response to exercise. In slow-twitch muscles, is involved in regulation of sarcoplasmic reticulum (SR) Ca(2+) transport and in fast-twitch muscle participates in the control of Ca(2+) release from the SR through phosphorylation of triadin, a ryanodine receptor-coupling factor, and phospholamban (PLN/PLB), an endogenous inhibitor of SERCA2A/ATP2A2. In response to interferon-gamma (IFN-gamma) stimulation, catalyzes phosphorylation of STAT1, stimulating the JAK-STAT signaling pathway. Phosphorylates reticulophagy regulator RETREG1 at 'Thr-134' under endoplasmic reticulum stress conditions which enhances RETREG1 oligomerization and its membrane scission and reticulophagy activity. The chain is Calcium/calmodulin-dependent protein kinase type II subunit beta (Camk2b) from Mus musculus (Mouse).